Reading from the N-terminus, the 821-residue chain is Condensin-2 complex subunit kle-2 (821 aa).

The segment at 389–426 (VMQNDEPNTSRRPDENYAPMDFDDDFGGGGDDDDDDYI) is disordered. Residues 409–424 (DFDDDFGGGGDDDDDD) are compositionally biased toward acidic residues. The stretch at 529–561 (TAILAEKKRRIKEKTAKIREARIQNMQRKRTAR) forms a coiled coil.

Belongs to the CND2 H2 (condensin-2 subunit 2) family. In terms of assembly, component of the condensin II complex, which contains the mix-1/SMC2 and smc-4/SMC4 heterodimer, and three non SMC subunits, capg-2, kle-2 and hcp-6 that probably regulate the complex. Within the complex, interacts with mix-1, smc-4, capg-2 and hcp-6.

It is found in the nucleus. Its subcellular location is the chromosome. The protein resides in the centromere. Functionally, regulatory subunit of the condensin II complex, a complex that seems to play a role in prophase chromosome condensation and in chromosome segregation in mitosis and in meiosis. The sequence is that of Condensin-2 complex subunit kle-2 (kle-2) from Caenorhabditis elegans.